The chain runs to 639 residues: Pheromone B alpha 1 receptor (639 aa).

7 helical membrane-spanning segments follow: residues 8-28, 37-57, 70-90, 113-133, 163-183, 209-229, and 272-292; these read LFPI…PWHL, FFMM…VAWA, ISIR…LCII, ILVD…LQYI, VWPV…LLQF, MALA…VIVL, and LTRW…GFAE. Disordered regions lie at residues 375–416, 490–516, 532–563, and 611–639; these read PRPM…SSPI, TVPH…SSSA, SADV…RLPS, and TTAG…RASV. The segment covering 383 to 398 has biased composition (low complexity); that stretch reads SSSGFSSSDSTRFGSS. 2 stretches are compositionally biased toward low complexity: residues 541 to 551 and 611 to 621; these read GSSAGGVASTS and TTAGAPATTTP.

Belongs to the G-protein coupled receptor 4 family.

The protein resides in the membrane. Receptor for the BAP1 pheromone, a prenylated mating factor. Has a role in the initiation of B-regulated nuclear migration. This is Pheromone B alpha 1 receptor (BAR1) from Schizophyllum commune (Split gill fungus).